We begin with the raw amino-acid sequence, 473 residues long: NADH-quinone oxidoreductase subunit N (473 aa).

Helical transmembrane passes span 3–23 (LHYL…LVIA), 30–50 (LAFY…CSLL), 62–82 (FSSM…FLWL), 99–119 (FYLL…SEHF), 120–140 (ASFF…IAYS), 153–173 (YLIL…IVYL), 195–215 (MLFT…LSLV), 230–252 (LPTT…WKLF), 262–282 (IVLT…NLLA), 291–311 (ILAF…FLFN), 326–346 (ALLF…SILM), 368–388 (AASL…LGFM), 408–428 (FLVI…MVML), and 444–464 (VASL…PALF).

Belongs to the complex I subunit 2 family. In terms of assembly, NDH-1 is composed of 13 different subunits. Subunits NuoA, H, J, K, L, M, N constitute the membrane sector of the complex.

The protein localises to the cell inner membrane. It catalyses the reaction a quinone + NADH + 5 H(+)(in) = a quinol + NAD(+) + 4 H(+)(out). In terms of biological role, NDH-1 shuttles electrons from NADH, via FMN and iron-sulfur (Fe-S) centers, to quinones in the respiratory chain. The immediate electron acceptor for the enzyme in this species is believed to be ubiquinone. Couples the redox reaction to proton translocation (for every two electrons transferred, four hydrogen ions are translocated across the cytoplasmic membrane), and thus conserves the redox energy in a proton gradient. This is NADH-quinone oxidoreductase subunit N from Shewanella woodyi (strain ATCC 51908 / MS32).